Consider the following 402-residue polypeptide: F-box/kelch-repeat protein At4g39590 (402 aa).

Low complexity predominate over residues 1-14 (MFPMSSTSRSSAAN). The tract at residues 1–37 (MFPMSSTSRSSAANNRKDPPRKKNKETPSPVTREPTS) is disordered. The segment covering 27–37 (TPSPVTREPTS) has biased composition (polar residues). In terms of domain architecture, F-box spans 35 to 81 (PTSIDSLPNDLLLNCFARVSRMYYPALSRVSKRFRSIVTSPEIYNTR). Kelch repeat units lie at residues 143 to 198 (NIYR…VVDG), 199 to 246 (KIYV…YRRA), 255 to 300 (KLYL…LFYW), and 302 to 341 (QGVF…DLGG).

This Arabidopsis thaliana (Mouse-ear cress) protein is F-box/kelch-repeat protein At4g39590.